Reading from the N-terminus, the 646-residue chain is Centrosomal protein of 72 kDa (646 aa).

3 LRR repeats span residues 28-49 (ELRS…GNSL), 54-75 (ALKS…QYLV), and 76-97 (SLES…FRLH). The region spanning 110–149 (NPVVKNESDYRLFVVHMLPKLRQLDDRPVRESERKASQLH) is the LRRCT domain. Residues S117 and S236 each carry the phosphoserine modification. Disordered stretches follow at residues 300–342 (SVDV…RFQV) and 357–399 (GPSS…SDPR). Low complexity predominate over residues 307–319 (ASSAQKSSLSSQK). S380 carries the post-translational modification Phosphoserine. Over residues 383–392 (EALEAEERTS) the composition is skewed to basic and acidic residues. S402 carries the phosphoserine modification. The stretch at 476–622 (LSLENKTLQS…RAEVEQMRWS (147 aa)) forms a coiled coil.

It belongs to the CEP72 family. Interacts with KIZ, PCM1 and CDK5RAP2.

The protein localises to the cytoplasm. Its subcellular location is the cytoskeleton. It localises to the microtubule organizing center. It is found in the centrosome. The protein resides in the centriolar satellite. Its function is as follows. Involved in the recruitment of key centrosomal proteins to the centrosome. Provides centrosomal microtubule-nucleation activity on the gamma-tubulin ring complexes (gamma-TuRCs) and has critical roles in forming a focused bipolar spindle, which is needed for proper tension generation between sister chromatids. Required for localization of KIZ, AKAP9 and gamma-tubulin ring complexes (gamma-TuRCs). Involved in centriole duplication. Required for CDK5RAP22, CEP152, WDR62 and CEP63 centrosomal localization and promotes the centrosomal localization of CDK2. This Mus musculus (Mouse) protein is Centrosomal protein of 72 kDa (Cep72).